The following is a 271-amino-acid chain: uncharacterized protein (271 aa).

3 helical membrane passes run 30 to 50, 189 to 209, and 218 to 238; these read IWFPIVVGIIASAVGMFGMLL, ALAAVIEELLVNIATAIYFLI, and FLVTVGSSLTYLSNIPMIFAC.

It is found in the cell membrane. This is an uncharacterized protein from Aquifex aeolicus (strain VF5).